The chain runs to 68 residues: MAQERIFGTGSRREDEPDTPAPVDPPVSGAAQAQRDMQGTDDLLAEIDGVLETNAEAFVKGFVQKGGQ.

A disordered region spans residues 1-37; it reads MAQERIFGTGSRREDEPDTPAPVDPPVSGAAQAQRDM. The interval 24–62 is ARC ATPase binding; the sequence is DPPVSGAAQAQRDMQGTDDLLAEIDGVLETNAEAFVKGF. The residue at position 68 (Gln68) is a Deamidated glutamine. Gln68 is covalently cross-linked (Isoglutamyl lysine isopeptide (Gln-Lys) (interchain with K-? in acceptor proteins)).

It belongs to the prokaryotic ubiquitin-like protein family. As to quaternary structure, strongly interacts with the proteasome-associated ATPase ARC through a hydrophobic interface; the interacting region of Pup lies in its C-terminal half. There is one Pup binding site per ARC hexamer ring. Post-translationally, is modified by deamidation of its C-terminal glutamine to glutamate by the deamidase Dop, a prerequisite to the subsequent pupylation process.

It participates in protein degradation; proteasomal Pup-dependent pathway. Its function is as follows. Protein modifier that is covalently attached to lysine residues of substrate proteins, thereby targeting them for proteasomal degradation. The tagging system is termed pupylation. In Kocuria rhizophila (strain ATCC 9341 / DSM 348 / NBRC 103217 / DC2201), this protein is Prokaryotic ubiquitin-like protein Pup.